The chain runs to 156 residues: Small ribosomal subunit protein uS7 (156 aa).

Belongs to the universal ribosomal protein uS7 family. As to quaternary structure, part of the 30S ribosomal subunit. Contacts proteins S9 and S11.

Functionally, one of the primary rRNA binding proteins, it binds directly to 16S rRNA where it nucleates assembly of the head domain of the 30S subunit. Is located at the subunit interface close to the decoding center, probably blocks exit of the E-site tRNA. The sequence is that of Small ribosomal subunit protein uS7 from Clostridium kluyveri (strain NBRC 12016).